Here is a 1406-residue protein sequence, read N- to C-terminus: DNA-directed RNA polymerase subunit beta' (1406 aa).

Zn(2+)-binding residues include cysteine 72, cysteine 74, cysteine 87, and cysteine 90. Mg(2+) is bound by residues aspartate 462, aspartate 464, and aspartate 466. 4 residues coordinate Zn(2+): cysteine 816, cysteine 891, cysteine 898, and cysteine 901.

This sequence belongs to the RNA polymerase beta' chain family. In terms of assembly, the RNAP catalytic core consists of 2 alpha, 1 beta, 1 beta' and 1 omega subunit. When a sigma factor is associated with the core the holoenzyme is formed, which can initiate transcription. The cofactor is Mg(2+). Zn(2+) serves as cofactor.

It catalyses the reaction RNA(n) + a ribonucleoside 5'-triphosphate = RNA(n+1) + diphosphate. DNA-dependent RNA polymerase catalyzes the transcription of DNA into RNA using the four ribonucleoside triphosphates as substrates. The chain is DNA-directed RNA polymerase subunit beta' from Psychrobacter arcticus (strain DSM 17307 / VKM B-2377 / 273-4).